The chain runs to 195 residues: Imidazoleglycerol-phosphate dehydratase (195 aa).

It belongs to the imidazoleglycerol-phosphate dehydratase family.

It localises to the cytoplasm. The enzyme catalyses D-erythro-1-(imidazol-4-yl)glycerol 3-phosphate = 3-(imidazol-4-yl)-2-oxopropyl phosphate + H2O. Its pathway is amino-acid biosynthesis; L-histidine biosynthesis; L-histidine from 5-phospho-alpha-D-ribose 1-diphosphate: step 6/9. This Methylorubrum populi (strain ATCC BAA-705 / NCIMB 13946 / BJ001) (Methylobacterium populi) protein is Imidazoleglycerol-phosphate dehydratase.